The chain runs to 54 residues: Small ribosomal subunit protein uS14 (54 aa).

Residues Cys-19, Cys-22, Cys-37, and Cys-40 each coordinate Zn(2+).

This sequence belongs to the universal ribosomal protein uS14 family. Zinc-binding uS14 subfamily. As to quaternary structure, part of the 30S ribosomal subunit. Zn(2+) is required as a cofactor.

Its function is as follows. Binds 16S rRNA, required for the assembly of 30S particles. The sequence is that of Small ribosomal subunit protein uS14 from Pyrobaculum aerophilum (strain ATCC 51768 / DSM 7523 / JCM 9630 / CIP 104966 / NBRC 100827 / IM2).